The primary structure comprises 376 residues: Dihydroorotate dehydrogenase (quinone) (376 aa).

FMN contacts are provided by residues 78 to 82 (AGFDK) and threonine 102. Lysine 82 contributes to the substrate binding site. Residue 127 to 131 (NRMGF) participates in substrate binding. Residues asparagine 157 and asparagine 190 each coordinate FMN. Asparagine 190 serves as a coordination point for substrate. Residue serine 193 is the Nucleophile of the active site. Residue asparagine 195 participates in substrate binding. Residues lysine 228 and threonine 256 each coordinate FMN. Residue 257–258 (NT) participates in substrate binding. Residues glycine 286, glycine 315, and 336–337 (YT) each bind FMN.

This sequence belongs to the dihydroorotate dehydrogenase family. Type 2 subfamily. Monomer. It depends on FMN as a cofactor.

The protein resides in the cell membrane. The enzyme catalyses (S)-dihydroorotate + a quinone = orotate + a quinol. The protein operates within pyrimidine metabolism; UMP biosynthesis via de novo pathway; orotate from (S)-dihydroorotate (quinone route): step 1/1. Its function is as follows. Catalyzes the conversion of dihydroorotate to orotate with quinone as electron acceptor. The protein is Dihydroorotate dehydrogenase (quinone) of Trichormus variabilis (strain ATCC 29413 / PCC 7937) (Anabaena variabilis).